Reading from the N-terminus, the 411-residue chain is Snake venom metalloproteinase ACLF (411 aa).

Residues 1 to 20 (MIQVLLVTLCLAAFPYQGSS) form the signal peptide. Residues 21–189 (IILESGNVND…KKAFQLNLTP (169 aa)) constitute a propeptide that is removed on maturation. The 197-residue stretch at 197-393 (RYVELVIVAD…NNPQCILNKP (197 aa)) folds into the Peptidase M12B domain. E200 and D284 together coordinate Ca(2+). Intrachain disulfides connect C308–C388, C348–C372, and C350–C355. H333 contacts Zn(2+). E334 is a catalytic residue. Zn(2+)-binding residues include H337 and H343. Residues C388, N391, V403, N406, L408, and E410 each contribute to the Ca(2+) site.

The protein belongs to the venom metalloproteinase (M12B) family. P-I subfamily. In terms of assembly, monomer. The cofactor is Zn(2+). Expressed by the venom gland.

It is found in the secreted. Inhibited by EDTA and 1,10-phenanthroline, but not by PMSF. Its function is as follows. Snake venom zinc metalloprotease that has fibrinolytic activity. The recombinant enzyme cleaves both alpha- and beta-chains of fibrinogen, but not the gamma-chain. The recombinant protein does not produce hemorrhage in mice. Cleaves the peptide substrate Abz-LVEALYQ-EDDnp at the Ala-Leu bond in vitro. The protein is Snake venom metalloproteinase ACLF (ACLPREF) of Agkistrodon contortrix laticinctus (Broad-banded copperhead).